A 324-amino-acid chain; its full sequence is Alkanal monooxygenase beta chain (324 aa).

This sequence belongs to the bacterial luciferase oxidoreductase family. As to quaternary structure, heterodimer of an alpha and a beta chain.

It catalyses the reaction a long-chain fatty aldehyde + FMNH2 + O2 = a long-chain fatty acid + hnu + FMN + H2O + 2 H(+). Functionally, light-emitting reaction in luminous bacteria. The specific role of the beta subunit is unknown, but it is absolutely required for bioluminescence activity. This is Alkanal monooxygenase beta chain (luxB) from Photorhabdus luminescens (Xenorhabdus luminescens).